The chain runs to 78 residues: WAP four-disulfide core domain protein 12 (78 aa).

The signal sequence occupies residues 1-21; that stretch reads MWPNSILVLTVLLISSTLVTG. Residues 25 to 72 form the WAP domain; it reads KGAEKGVCPPDNVRCIRGEDPQCHNDNDCKDQKICCYWHCGFKCVQPV. Cystine bridges form between Cys-32–Cys-60, Cys-39–Cys-64, Cys-47–Cys-59, and Cys-53–Cys-68.

It localises to the secreted. Its function is as follows. Antibacterial protein. Putative acid-stable proteinase inhibitor. The polypeptide is WAP four-disulfide core domain protein 12 (Rattus norvegicus (Rat)).